Here is a 415-residue protein sequence, read N- to C-terminus: Levansucrase LscA (415 aa).

Residues Trp-45, Asp-46, Ala-132, Arg-202, and Asp-203 each contribute to the sucrose site. Asp-46 functions as the Nucleophile in the catalytic mechanism. Glu-287 (proton donor/acceptor) is an active-site residue.

The protein belongs to the glycosyl hydrolase 68 family.

It localises to the periplasm. It carries out the reaction [6)-beta-D-fructofuranosyl-(2-&gt;](n) alpha-D-glucopyranoside + sucrose = [6)-beta-D-fructofuranosyl-(2-&gt;](n+1) alpha-D-glucopyranoside + D-glucose. Catalyzes the synthesis of levan, a fructose polymer, by transferring the fructosyl moiety from sucrose to a growing acceptor molecule. LscA encodes a functional enzyme in vitro, when expressed in E.coli under control of the vector-based lactose promoter (Plac), and it can restore levan production to the lscB-lscC double mutant. However, lscA is not expressed in P.savastanoi pv. glycinea PG4180 under standard conditions. It could be an ancestral Lsc variant in P.syringae. The sequence is that of Levansucrase LscA from Pseudomonas savastanoi pv. glycinea (Pseudomonas syringae pv. glycinea).